The sequence spans 304 residues: Heme A synthase (304 aa).

Topologically, residues 1–8 (MFNKRNLK) are cytoplasmic. The chain crosses the membrane as a helical span at residues 9–29 (WLSVLATIIMAFVQLGGALVT). Topologically, residues 30–67 (KTGSEDGCGSSWPLCHGALLPQNLPIDTIIELSHRAVS) are extracellular. Cysteine 37 and cysteine 44 are joined by a disulfide. Glutamate 60 is a catalytic residue. Position 63 (histidine 63) interacts with heme o. A helical membrane pass occupies residues 68-88 (GLSLIVVLWLAITAWKHIGYI). The Cytoplasmic segment spans residues 89-93 (REVKP). Residues 94-114 (LAIISIAFLLVQALIGAAAVI) form a helical membrane-spanning segment. At 115–123 (WQQNSYVLA) the chain is on the extracellular side. A helical transmembrane segment spans residues 124 to 144 (LHFGISLISFSSVFVLMLIIF). Histidine 125 provides a ligand contact to heme o. Residues 145 to 163 (EVDKKYEADELYIRKPLRR) are Cytoplasmic-facing. A helical transmembrane segment spans residues 164-184 (LTWIMTGIVYLTIYTGALVRH). Residues 185-215 (AKASLAYGGWPLPFHDIIPHTEQDWVQFAHR) are Extracellular-facing. Histidine 214 is a binding site for heme b. Residues 216–236 (GMAFITFFWIMITFIHAVKNY) form a helical membrane-spanning segment. The Cytoplasmic portion of the chain corresponds to 237–244 (SENRTIRY). Residues 245–265 (GYTTAFILIILQVITGALSVM) traverse the membrane as a helical segment. Over 266 to 270 (TNVNL) the chain is Extracellular. Residues 271 to 291 (FIALLHALFITILFGMIAYFI) traverse the membrane as a helical segment. Residue histidine 276 coordinates heme b. Over 292-304 (MLMLRTIRSEKIK) the chain is Cytoplasmic.

This sequence belongs to the COX15/CtaA family. Type 1 subfamily. As to quaternary structure, interacts with CtaB. Heme b serves as cofactor.

Its subcellular location is the cell membrane. The catalysed reaction is Fe(II)-heme o + 2 A + H2O = Fe(II)-heme a + 2 AH2. It participates in porphyrin-containing compound metabolism; heme A biosynthesis; heme A from heme O: step 1/1. In terms of biological role, catalyzes the conversion of heme O to heme A by two successive hydroxylations of the methyl group at C8. The first hydroxylation forms heme I, the second hydroxylation results in an unstable dihydroxymethyl group, which spontaneously dehydrates, resulting in the formyl group of heme A. The chain is Heme A synthase from Staphylococcus haemolyticus (strain JCSC1435).